Consider the following 169-residue polypeptide: Ureidoglycolate lyase (169 aa).

This sequence belongs to the ureidoglycolate lyase family. Homodimer. Ni(2+) serves as cofactor.

It carries out the reaction (S)-ureidoglycolate = urea + glyoxylate. The protein operates within nitrogen metabolism; (S)-allantoin degradation. In terms of biological role, catalyzes the catabolism of the allantoin degradation intermediate (S)-ureidoglycolate, generating urea and glyoxylate. Involved in the utilization of allantoin as nitrogen source. The chain is Ureidoglycolate lyase from Pseudomonas aeruginosa (strain LESB58).